A 94-amino-acid polypeptide reads, in one-letter code: Aspartyl/glutamyl-tRNA(Asn/Gln) amidotransferase subunit C (94 aa).

Belongs to the GatC family. Heterotrimer of A, B and C subunits.

It catalyses the reaction L-glutamyl-tRNA(Gln) + L-glutamine + ATP + H2O = L-glutaminyl-tRNA(Gln) + L-glutamate + ADP + phosphate + H(+). It carries out the reaction L-aspartyl-tRNA(Asn) + L-glutamine + ATP + H2O = L-asparaginyl-tRNA(Asn) + L-glutamate + ADP + phosphate + 2 H(+). Allows the formation of correctly charged Asn-tRNA(Asn) or Gln-tRNA(Gln) through the transamidation of misacylated Asp-tRNA(Asn) or Glu-tRNA(Gln) in organisms which lack either or both of asparaginyl-tRNA or glutaminyl-tRNA synthetases. The reaction takes place in the presence of glutamine and ATP through an activated phospho-Asp-tRNA(Asn) or phospho-Glu-tRNA(Gln). This chain is Aspartyl/glutamyl-tRNA(Asn/Gln) amidotransferase subunit C, found in Hydrogenobaculum sp. (strain Y04AAS1).